The following is a 254-amino-acid chain: Glutamate racemase (254 aa).

Substrate-binding positions include 10–11 and 42–43; these read DS and YG. C73 (proton donor/acceptor) is an active-site residue. Substrate is bound at residue 74-75; it reads NT. Catalysis depends on C183, which acts as the Proton donor/acceptor. 184–185 provides a ligand contact to substrate; the sequence is TH.

It belongs to the aspartate/glutamate racemases family.

The enzyme catalyses L-glutamate = D-glutamate. It functions in the pathway cell wall biogenesis; peptidoglycan biosynthesis. Provides the (R)-glutamate required for cell wall biosynthesis. In Herpetosiphon aurantiacus (strain ATCC 23779 / DSM 785 / 114-95), this protein is Glutamate racemase.